A 121-amino-acid polypeptide reads, in one-letter code: Small ribosomal subunit protein uS11 (121 aa).

Belongs to the universal ribosomal protein uS11 family. Part of the 30S ribosomal subunit. Interacts with proteins S7 and S18. Binds to IF-3.

Located on the platform of the 30S subunit, it bridges several disparate RNA helices of the 16S rRNA. Forms part of the Shine-Dalgarno cleft in the 70S ribosome. The chain is Small ribosomal subunit protein uS11 from Mycoplasma genitalium (strain ATCC 33530 / DSM 19775 / NCTC 10195 / G37) (Mycoplasmoides genitalium).